Here is a 457-residue protein sequence, read N- to C-terminus: Equilibrative nucleoside transporter 1 (457 aa).

At 1 to 12 the chain is on the cytoplasmic side; the sequence is MTTSHQPQDRYK. A helical membrane pass occupies residues 13–29; it reads AVWLIFFVLGLGTLLPW. Residues 30-82 lie on the Extracellular side of the membrane; it reads NFFITATQYFTSRLNTSQNISLVTNQSCESTEALADPSVSLPARSSLSAIFNN. Residues asparagine 44, asparagine 48, and asparagine 54 are each glycosylated (N-linked (GlcNAc...) asparagine). Residues 83 to 107 form a helical membrane-spanning segment; that stretch reads VMTLCAMLPLLIFTCLNSFLHQKVS. Residues 108–111 are Cytoplasmic-facing; it reads QSLR. The helical transmembrane segment at 112–130 threads the bilayer; sequence ILGSLLAILLVFLVTATLV. Topologically, residues 131 to 138 are extracellular; it reads KVQMDALS. Residues 139–157 traverse the membrane as a helical segment; sequence FFIITMIKIVLINSFGAIL. Residues 158–174 lie on the Cytoplasmic side of the membrane; it reads QASLFGLAGVLPANYTA. A helical transmembrane segment spans residues 175 to 199; sequence PIMSGQGLAGFFTSVAMICAVASGS. Residues 200–206 are Extracellular-facing; that stretch reads KLSESAF. A helical transmembrane segment spans residues 207 to 227; the sequence is GYFITACAVVILAILCYLALP. The Cytoplasmic segment spans residues 228-291; sequence WMEFYRHYLQ…IKAILKSIWV (64 aa). Residue serine 254 is modified to Phosphoserine. Basic and acidic residues predominate over residues 255–266; that stretch reads EGEEPRGGREES. The disordered stretch occupies residues 255 to 275; that stretch reads EGEEPRGGREESGVPGPNSLP. Position 273 is a phosphoserine (serine 273). A helical transmembrane segment spans residues 292 to 311; the sequence is LALSVCFIFTVTIGLFPAVT. At 312–323 the chain is on the extracellular side; that stretch reads AEVESSIAGTSP. Residues 324 to 343 form a helical membrane-spanning segment; it reads WKNCYFIPVACFLNFNVFDW. At 344–360 the chain is on the cytoplasmic side; it reads LGRSLTAICMWPGQDSR. The helical transmembrane segment at 361–379 threads the bilayer; it reads WLPVLVACRVVFIPLLMLC. The Extracellular segment spans residues 380–394; that stretch reads NVKQHHYLPSLFKHD. Residues 395–414 traverse the membrane as a helical segment; it reads VWFITFMAAFAFSNGYLASL. Residues 415–432 lie on the Cytoplasmic side of the membrane; the sequence is CMCFGPKKVKPAEAETAG. Residues 433–453 traverse the membrane as a helical segment; it reads NIMSFFLCLGLALGAVLSFLL. At 454 to 457 the chain is on the extracellular side; sequence RALV.

This sequence belongs to the SLC29A/ENT transporter (TC 2.A.57) family. As to quaternary structure, identified in a complex with STOM. Expressed in jejunum, liver and lung. Expressed in testis at the blood-testis barrier (at protein level). Expressed in ventricular myocytes (at protein level). Expressed in kidney.

It is found in the basolateral cell membrane. The protein resides in the apical cell membrane. It localises to the cell membrane. The catalysed reaction is adenosine(in) = adenosine(out). It carries out the reaction guanosine(in) = guanosine(out). The enzyme catalyses inosine(in) = inosine(out). It catalyses the reaction uridine(out) = uridine(in). The catalysed reaction is thymidine(in) = thymidine(out). It carries out the reaction cytidine(in) = cytidine(out). The enzyme catalyses adenine(out) = adenine(in). It catalyses the reaction guanine(out) = guanine(in). The catalysed reaction is thymine(out) = thymine(in). It carries out the reaction uracil(in) = uracil(out). The enzyme catalyses hypoxanthine(out) = hypoxanthine(in). Transport activity is sensitive to low concentrations of the inhibitor nitrobenzylmercaptopurine riboside (NBMPR). In terms of biological role, uniporter involved in the facilitative transport of nucleosides and nucleobases, and contributes to maintaining their cellular homeostasis. Functions as a Na(+)-independent transporter. Involved in the transport of nucleosides such as adenosine, thymidine and uridine. Also transports purine nucleobases (hypoxanthine, adenine, guanine) and pyrimidine nucleobases (thymine, uracil). Mediates basolateral nucleoside uptake into Sertoli cells, thereby regulating the transport of nucleosides in testis across the blood-testis barrier. Regulates inosine levels in brown adipocytes tissues (BAT) and extracellular inosine levels, which controls BAT-dependent energy expenditure. The chain is Equilibrative nucleoside transporter 1 from Rattus norvegicus (Rat).